We begin with the raw amino-acid sequence, 941 residues long: Probable lipoxygenase 8, chloroplastic (941 aa).

2 disordered regions span residues Met1–Ser22 and Leu45–Cys68. A chloroplast-targeting transit peptide spans Met1–Arg67. The PLAT domain occupies Ala100–Arg236. Residues Ala242 to Ile941 form the Lipoxygenase domain. 2 disordered regions span residues Tyr255–Asp274 and Asn288–Asn331. Residues Ser319–Asn331 show a composition bias toward basic and acidic residues. Residues His598, His603, His790, Asn794, and Ile941 each contribute to the Fe cation site.

This sequence belongs to the lipoxygenase family. It depends on Fe cation as a cofactor.

The protein resides in the plastid. It localises to the chloroplast. The catalysed reaction is (9Z,12Z)-octadecadienoate + O2 = (13S)-hydroperoxy-(9Z,11E)-octadecadienoate. The enzyme catalyses (9Z,12Z,15Z)-octadecatrienoate + O2 = (13S)-hydroperoxy-(9Z,11E,15Z)-octadecatrienoate. It participates in lipid metabolism; oxylipin biosynthesis. Its function is as follows. Plant lipoxygenase may be involved in a number of diverse aspects of plant physiology including growth and development, pest resistance, and senescence or responses to wounding. It catalyzes the hydroperoxidation of lipids containing a cis,cis-1,4-pentadiene structure. The sequence is that of Probable lipoxygenase 8, chloroplastic (CM-LOX2) from Oryza sativa subsp. japonica (Rice).